Consider the following 321-residue polypeptide: Ribosomal RNA small subunit methyltransferase H (321 aa).

Residues 43-45, Asp-63, Phe-89, Asp-110, and Gln-117 contribute to the S-adenosyl-L-methionine site; that span reads GGH. Positions 286 to 321 are disordered; that stretch reads HPAGKALRAGPRETRDNPRSRSAVLRVAERSERHAA. Composition is skewed to basic and acidic residues over residues 295-304 and 312-321; these read GPRETRDNPR and VAERSERHAA.

It belongs to the methyltransferase superfamily. RsmH family.

Its subcellular location is the cytoplasm. The catalysed reaction is cytidine(1402) in 16S rRNA + S-adenosyl-L-methionine = N(4)-methylcytidine(1402) in 16S rRNA + S-adenosyl-L-homocysteine + H(+). Functionally, specifically methylates the N4 position of cytidine in position 1402 (C1402) of 16S rRNA. The protein is Ribosomal RNA small subunit methyltransferase H of Acidithiobacillus ferrooxidans (strain ATCC 23270 / DSM 14882 / CIP 104768 / NCIMB 8455) (Ferrobacillus ferrooxidans (strain ATCC 23270)).